Reading from the N-terminus, the 531-residue chain is PHD finger protein 21B (531 aa).

Disordered stretches follow at residues proline 79–glutamine 99, serine 184–proline 222, valine 238–glutamate 277, and glutamate 295–serine 314. Positions lysine 265–glutamate 277 are enriched in basic and acidic residues. Residues aspartate 352–lysine 399 form a PHD-type zinc finger. Residues lysine 423–lysine 465 are a coiled coil. A disordered region spans residues leucine 507 to asparagine 531. Residues proline 522–asparagine 531 are compositionally biased toward polar residues.

This is PHD finger protein 21B (PHF21B) from Homo sapiens (Human).